Consider the following 509-residue polypeptide: Transcription factor SOX-9 (509 aa).

Disordered stretches follow at residues M1–D67 and R160–V273. Low complexity predominate over residues S30–S41. Residues D42–T52 show a composition bias toward polar residues. Basic and acidic residues-rich tracts occupy residues G56–D67 and R160–Y174. Residues E63 to P103 form a dimerization (DIM) region. Residues E63 to P103 form a PQA region. S64 bears the Phosphoserine mark. Residues V105–K173 constitute a DNA-binding region (HMG box). Residue S211 is modified to Phosphoserine. Residues P224–P307 form a transactivation domain (TAM) region. 2 consecutive short sequence motifs (9aaTAD) follow at residues I275–S284 and D290–L298. Residues V334–P415 are disordered. Positions A341–Q376 are enriched in pro residues. Residues H380–P415 show a composition bias toward polar residues. Residues R394–P509 form a transactivation domain (TAC) region. A Glycyl lysine isopeptide (Lys-Gly) (interchain with G-Cter in ubiquitin) cross-link involves residue K398. The short motif at T460–Y468 is the 9aaTAD 3 element. The segment at P479 to P509 is disordered. The span at G485–P509 shows a compositional bias: polar residues.

As to quaternary structure, homodimer; homodimerization is required for activity. Interacts (via C-terminus) with ZNF219; forming a complex that binds to the COL2A1 promoter and activates COL2A1 expression. Interacts with DDRGK1. Interacts with EP300/p300. Interacts with beta-catenin (CTNNB1); inhibiting CTNNB1 activity by competing with the binding sites of TCF/LEF within CTNNB1. Post-translationally, acetylated; acetylation impairs nuclear localization and ability to transactivate expression of target genes. Deacetylated by SIRT1. Phosphorylation at Ser-64 and Ser-211 by PKA increases transcriptional activity and may help delay chondrocyte maturation downstream of PTHLH/PTHrP signaling. Phosphorylation at either Ser-64 or Ser-211 is required for sumoylation, but phosphorylation is not dependent on sumoylation. Phosphorylated on tyrosine residues; tyrosine dephosphorylation by PTPN11/SHP2 blocks SOX9 phosphorylation by PKA and subsequent SUMOylation. In terms of processing, sumoylated; phosphorylation at either Ser-64 or Ser-211 is required for sumoylation. Sumoylation is induced by BMP signaling pathway. Post-translationally, ubiquitinated; ubiquitination leads to proteasomal degradation and is negatively regulated by DDRGK1.

Its subcellular location is the nucleus. Transcription factor that plays a key role in chondrocytes differentiation and skeletal development. Specifically binds the 5'-ACAAAG-3' DNA motif present in enhancers and super-enhancers and promotes expression of genes important for chondrogenesis, including cartilage matrix protein-coding genes COL2A1, COL4A2, COL9A1, COL11A2 and ACAN, SOX5 and SOX6. Also binds to some promoter regions. Plays a central role in successive steps of chondrocyte differentiation. Absolutely required for precartilaginous condensation, the first step in chondrogenesis during which skeletal progenitors differentiate into prechondrocytes. Together with SOX5 and SOX6, required for overt chondrogenesis when condensed prechondrocytes differentiate into early stage chondrocytes, the second step in chondrogenesis. Later, required to direct hypertrophic maturation and block osteoblast differentiation of growth plate chondrocytes: maintains chondrocyte columnar proliferation, delays prehypertrophy and then prevents osteoblastic differentiation of chondrocytes by lowering beta-catenin (CTNNB1) signaling and RUNX2 expression. Also required for chondrocyte hypertrophy, both indirectly, by keeping the lineage fate of chondrocytes, and directly, by remaining present in upper hypertrophic cells and transactivating COL10A1 along with MEF2C. Low lipid levels are the main nutritional determinant for chondrogenic commitment of skeletal progenitor cells: when lipids levels are low, FOXO (FOXO1 and FOXO3) transcription factors promote expression of SOX9, which induces chondrogenic commitment and suppresses fatty acid oxidation. Mechanistically, helps, but is not required, to remove epigenetic signatures of transcriptional repression and deposit active promoter and enhancer marks at chondrocyte-specific genes. Acts in cooperation with the Hedgehog pathway-dependent GLI (GLI1 and GLI3) transcription factors. In addition to cartilage development, also acts as a regulator of proliferation and differentiation in epithelial stem/progenitor cells: involved in the lung epithelium during branching morphogenesis, by balancing proliferation and differentiation and regulating the extracellular matrix. Controls epithelial branching during kidney development. This Callithrix jacchus (White-tufted-ear marmoset) protein is Transcription factor SOX-9 (SOX9).